Here is a 370-residue protein sequence, read N- to C-terminus: Lipoyl synthase 1, chloroplastic (370 aa).

Disordered stretches follow at residues 1–25 (MMQSSLARPLPRPPIRPACGNPVCR) and 39–67 (EAAPPAPAPAARRAAGPYTGRDPEVKKPA). The transit peptide at 1-37 (MMQSSLARPLPRPPIRPACGNPVCRSRPGSVSVARCR) directs the protein to the chloroplast. [4Fe-4S] cluster-binding residues include Cys95, Cys100, Cys106, Cys132, Cys136, Cys139, and Ser347. The Radical SAM core domain maps to 115–336 (GEGDGIATAT…KEYGESVGFR (222 aa)).

It belongs to the radical SAM superfamily. Lipoyl synthase family. [4Fe-4S] cluster is required as a cofactor.

Its subcellular location is the plastid. It is found in the chloroplast. It carries out the reaction [[Fe-S] cluster scaffold protein carrying a second [4Fe-4S](2+) cluster] + N(6)-octanoyl-L-lysyl-[protein] + 2 oxidized [2Fe-2S]-[ferredoxin] + 2 S-adenosyl-L-methionine + 4 H(+) = [[Fe-S] cluster scaffold protein] + N(6)-[(R)-dihydrolipoyl]-L-lysyl-[protein] + 4 Fe(3+) + 2 hydrogen sulfide + 2 5'-deoxyadenosine + 2 L-methionine + 2 reduced [2Fe-2S]-[ferredoxin]. It participates in protein modification; protein lipoylation via endogenous pathway; protein N(6)-(lipoyl)lysine from octanoyl-[acyl-carrier-protein]: step 2/2. Functionally, catalyzes the radical-mediated insertion of two sulfur atoms into the C-6 and C-8 positions of the octanoyl moiety bound to the lipoyl domains of lipoate-dependent enzymes, thereby converting the octanoylated domains into lipoylated derivatives. The sequence is that of Lipoyl synthase 1, chloroplastic from Oryza sativa subsp. indica (Rice).